Consider the following 218-residue polypeptide: Small ribosomal subunit protein uS5 (218 aa).

The interval 1-49 (MPGRQRRDGGSGPAGQNGPNTGDNRGGGDRRGGGRDDRRGGQSAEKSNH) is disordered. The segment covering 26-49 (GGGDRRGGGRDDRRGGQSAEKSNH) has biased composition (basic and acidic residues). The S5 DRBM domain maps to 49–112 (HIERVVTINR…EEARKSFFRV (64 aa)).

Belongs to the universal ribosomal protein uS5 family. Part of the 30S ribosomal subunit. Contacts proteins S4 and S8.

In terms of biological role, with S4 and S12 plays an important role in translational accuracy. Located at the back of the 30S subunit body where it stabilizes the conformation of the head with respect to the body. The sequence is that of Small ribosomal subunit protein uS5 from Rhodococcus jostii (strain RHA1).